A 351-amino-acid polypeptide reads, in one-letter code: Uroporphyrinogen decarboxylase (351 aa).

Residues 25–29 (RQAGR), Asp-74, Tyr-151, Ser-206, and His-325 contribute to the substrate site.

It belongs to the uroporphyrinogen decarboxylase family. In terms of assembly, homodimer.

The protein localises to the cytoplasm. The catalysed reaction is uroporphyrinogen III + 4 H(+) = coproporphyrinogen III + 4 CO2. The protein operates within porphyrin-containing compound metabolism; protoporphyrin-IX biosynthesis; coproporphyrinogen-III from 5-aminolevulinate: step 4/4. In terms of biological role, catalyzes the decarboxylation of four acetate groups of uroporphyrinogen-III to yield coproporphyrinogen-III. This chain is Uroporphyrinogen decarboxylase, found in Chlorobium phaeobacteroides (strain DSM 266 / SMG 266 / 2430).